The primary structure comprises 1939 residues: MSSDAEMAVFGEAAPYLRKSEKERIEAQNKPFDAKSSVFVVDAKESYVKATVQSREGGKVTAKTEGGATVTVKEDQVFSMNPPKYDKIEDMAMMTHLHEPAVLYNLKERYAAWMIYTYSGLFCVTVNPYKWLPVYNPEVVAAYRGKKRQEAPPHIFSISDNAYQFMLTDRENQSILITGESGAGKTVNTKRVIQYFATIAVTGDKKKEEAPSGKMQGTLEDQIISANPLLEAFGNAKTVRNDNSSRFGKFIRIHFGATGKLASADIETYLLEKSRVTFQLKAERSYHIFYQVMSNKKPELIEMLLITTNPYDFAYVSQGEITVPSIDDQEELMATDTAVDILGFTADEKVAIYKLTGAVMHYGNMKFKQKQREEQAEPDGTEVADKAAYLTSLNSADLLKALCYPRVKVGNEYVTKGQTVQQVYNSVGALAKAMYEKMFLWMVTRINQQLDTKQPRQYFIGVLDIAGFEIFDFNTLEQLCINFTNEKLQQFFNHHMFVLEQEEYKKEGIEWEFIDFGMDLAACIELIEKPMGIFSILEEECMFPKATDTSFKNKLYEQHLGKSNNFQKPKPAKGKAEAHFSLVHYAGTVDYNIIGWLDKNKDPLNETVVGLYQKSGLKTLAFLFSGGQAAEAEGGGGKKGGKKKGSSFQTVSALFRENLNKLMTNLKSTHPHFVRCLIPNETKTPGAMEHELVLHQLRCNGVLEGIRICRKGFPSRILYADFKQRYKVLNASAIPEGQFIDSKKASEKLLGSIDIDHTQYKFGHTKVFFKAGLLGTLEEMRDEKLAQLITRTQAVCRGYLMRVEFRKMMERRESIFCIQYNVRAFMNVKHWPWMKLYFKIKPLLKSAETEKEMATMKEDFEKAKEDLAKSEAKRKELEEKMVALMQEKNDLQLQVQAEADGLADAEERCDQLIKTKIQLEAKIKELTERAEDEEEINAELTAKKRKLEDECSELKKDIDDLELTLAKVEKEKHATENKVKNLTEEMAGLDENIVKLTKEKKALQEAHQQTLDDLQAEEDKVNTLTKAKTKLEQQVDDLEGSLEQEKKLRMDLERAKRKLEGDLKLAQESTMDIENDKQQLDEKLKKKEFEMSNLQSKIEDEQALGMQLQKKIKELQARIEELEEEIEAERASRAKAEKQRSDLSRELEEISERLEEAGGATSAQIEMNKKREAEFQKMRRDLEEATLQHEATAAALRKKHADSVAELGEQIDNLQRVKQKLEKEKSELKMEIDDLASNMETVSKAKGNLEKMCRTLEDQLSEVKTKEEEQQRLINELSAQKARLHTESGEFSRQLDEKDAMVSQLSRGKQAFTQQIEELKRQLEEESKAKNALAHALQSARHDCDLLREQYEEEQEAKAELQRAMSKANSEVAQWRTKYETDAIQRTEELEEAKKKLAQRLQDAEEHVEAVNSKCASLEKTKQRLQNEVEDLMIDVERSNAACAALDKKQRNFDKVLAEWKQKYEETQAELEASQKESRSLSTELFKVKNAYEESLDQLETLKRENKNLQQEISDLTEQIAEGGKHIHELEKIKKQIDQEKSELQASLEEAEASLEHEEGKILRIQLELNQVKSEIDRKIAEKDEEIDQLKRNHLRVVESMQSTLDAEIRSRNDALRIKKKMEGDLNEMEIQLNHANRQAAEAIRNLRNTQGMLKDTQLHLDDALRGQDDLKEQLAMVERRANLMQAEIEELRASLEQTERSRRVAEQELLDASERVQLLHTQNTSLINTKKKLETDISQIQGEMEDIVQEARNAEEKAKKAITDAAMMAEELKKEQDTSAHLERMKKNMEQTVKDLQHRLDEAEQLALKGGKKQIQKLEARVRELENEVENEQKRNIEAVKGLRKHERRVKELTYQTEEDRKNVLRLQDLVDKLQTKVKAYKRQAEEAEEQSNVNLAKFRKIQHELEEAEERADIAESQVNKLRVKSREVHTKVISEE.

The Myosin N-terminal SH3-like domain maps to 33 to 82; that stretch reads DAKSSVFVVDAKESYVKATVQSREGGKVTAKTEGGATVTVKEDQVFSMNP. Ser-36 bears the Phosphoserine mark. Phosphothreonine is present on residues Thr-64 and Thr-69. Phosphoserine is present on Ser-79. Residues 86-782 form the Myosin motor domain; the sequence is DKIEDMAMMT…LLGTLEEMRD (697 aa). At Lys-130 the chain carries N6,N6,N6-trimethyllysine. 179 to 186 is an ATP binding site; sequence GESGAGKT. Tyr-389 bears the Phosphotyrosine mark. Thr-391 carries the phosphothreonine modification. A Phosphoserine modification is found at Ser-392. Phosphothreonine is present on Thr-419. Tyr-424 is subject to Phosphotyrosine. At Ser-625 the chain carries Phosphoserine. Positions 659–681 are actin-binding; sequence LNKLMTNLKSTHPHFVRCLIPNE. A Pros-methylhistidine modification is found at His-757. Residues 761–775 form an actin-binding region; it reads KFGHTKVFFKAGLLG. Thr-776 bears the Phosphothreonine mark. The region spanning 785-814 is the IQ domain; the sequence is LAQLITRTQAVCRGYLMRVEFRKMMERRES. The stretch at 843 to 1939 forms a coiled coil; it reads LLKSAETEKE…EVHTKVISEE (1097 aa). Phosphoserine occurs at positions 1092 and 1096. Disordered stretches follow at residues 1128 to 1147 and 1153 to 1172; these read AERA…SREL and RLEE…KKRE. Residues Ser-1162 and Ser-1237 each carry the phosphoserine modification. Thr-1241 carries the post-translational modification Phosphothreonine. The residue at position 1243 (Ser-1243) is a Phosphoserine. Residue Thr-1255 is modified to Phosphothreonine. A Phosphoserine modification is found at Ser-1261. Thr-1265 carries the post-translational modification Phosphothreonine. Ser-1278 is subject to Phosphoserine. Phosphothreonine is present on Thr-1286. Residues Ser-1288, Ser-1292, Ser-1303, Ser-1306, and Ser-1413 each carry the phosphoserine modification. Tyr-1464 bears the Phosphotyrosine mark. At Thr-1467 the chain carries Phosphothreonine. Residue Ser-1474 is modified to Phosphoserine. Tyr-1492 is subject to Phosphotyrosine. Ser-1495 carries the phosphoserine modification. A Phosphothreonine modification is found at Thr-1501. Phosphoserine is present on Ser-1514. The residue at position 1517 (Thr-1517) is a Phosphothreonine. Residues Ser-1542, Ser-1547, Ser-1554, Ser-1574, Ser-1600, Ser-1603, Ser-1714, and Ser-1726 each carry the phosphoserine modification. Thr-1730 and Thr-1736 each carry phosphothreonine. A Phosphoserine modification is found at Ser-1739.

The protein belongs to the TRAFAC class myosin-kinesin ATPase superfamily. Myosin family. In terms of assembly, muscle myosin is a hexameric protein that consists of 2 heavy chain subunits (MHC), 2 alkali light chain subunits (MLC) and 2 regulatory light chain subunits (MLC-2).

The protein resides in the cytoplasm. It localises to the myofibril. In terms of biological role, muscle contraction. This chain is Myosin-4, found in Rattus norvegicus (Rat).